The following is a 128-amino-acid chain: 3-aminoacrylate deaminase RutC (128 aa).

Belongs to the RutC family.

The enzyme catalyses (Z)-3-aminoacrylate + H2O + H(+) = 3-oxopropanoate + NH4(+). Functionally, involved in pyrimidine catabolism. Catalyzes the deamination of 3-aminoacrylate to malonic semialdehyde, a reaction that can also occur spontaneously. RutC may facilitate the reaction and modulate the metabolic fitness, rather than catalyzing essential functions. This Enterobacter sp. (strain 638) protein is 3-aminoacrylate deaminase RutC.